Consider the following 96-residue polypeptide: Large ribosomal subunit protein uL23 (96 aa).

The protein belongs to the universal ribosomal protein uL23 family. In terms of assembly, part of the 50S ribosomal subunit. Contacts protein L29, and trigger factor when it is bound to the ribosome.

Its function is as follows. One of the early assembly proteins it binds 23S rRNA. One of the proteins that surrounds the polypeptide exit tunnel on the outside of the ribosome. Forms the main docking site for trigger factor binding to the ribosome. The chain is Large ribosomal subunit protein uL23 from Oleidesulfovibrio alaskensis (strain ATCC BAA-1058 / DSM 17464 / G20) (Desulfovibrio alaskensis).